The chain runs to 834 residues: Putative COX1/OXI3 intron 1 protein (834 aa).

The interval 162-188 (MKDTNNTKGNTKSEGSTERGNSGVDRG) is disordered. Polar residues predominate over residues 167 to 181 (NTKGNTKSEGSTERG). The region spanning 296 to 577 (LSNELGTGKF…TPARFLGYNI (282 aa)) is the Reverse transcriptase domain.

It localises to the mitochondrion. This is Putative COX1/OXI3 intron 1 protein (AI1) from Saccharomyces cerevisiae (strain ATCC 204508 / S288c) (Baker's yeast).